Here is a 438-residue protein sequence, read N- to C-terminus: Probable exopolygalacturonase B (438 aa).

A signal peptide spans 1–15 (MYLLPLTLFLTAAFG). N-linked (GlcNAc...) asparagine glycans are attached at residues asparagine 118, asparagine 185, and asparagine 225. The stretch at 209 to 248 (TNDVSFDNVYIHAFSTNASSDPANTDGMDSLDVDGVSFTN) is one PbH1 1 repeat. Residue aspartate 255 is the Proton donor of the active site. Residues cysteine 257 and cysteine 274 are joined by a disulfide bond. N-linked (GlcNAc...) asparagine glycosylation is found at asparagine 263 and asparagine 275. Residue histidine 278 is part of the active site. PbH1 repeat units follow at residues 295–316 (IENV…RLKA) and 327–348 (INNV…VLDQ). Residues asparagine 302, asparagine 329, asparagine 354, and asparagine 366 are each glycosylated (N-linked (GlcNAc...) asparagine). Cysteine 392 and cysteine 398 are joined by a disulfide. A PbH1 4 repeat occupies 398–430 (CTNITLSNVNLTSPKGTAEIVCDDIQGGIGVDC). 2 N-linked (GlcNAc...) asparagine glycosylation sites follow: asparagine 400 and asparagine 407.

It belongs to the glycosyl hydrolase 28 family.

Its subcellular location is the secreted. The catalysed reaction is [(1-&gt;4)-alpha-D-galacturonosyl](n) + H2O = alpha-D-galacturonate + [(1-&gt;4)-alpha-D-galacturonosyl](n-1). In terms of biological role, specific in hydrolyzing the terminal glycosidic bond of polygalacturonic acid and oligogalacturonates. The protein is Probable exopolygalacturonase B (pgxB) of Aspergillus niger (strain ATCC MYA-4892 / CBS 513.88 / FGSC A1513).